Here is a 477-residue protein sequence, read N- to C-terminus: C3a anaphylatoxin chemotactic receptor (477 aa).

Residues 1-23 (MESFDADTNSTDLHSRPLFQPQD) lie on the Extracellular side of the membrane. N-linked (GlcNAc...) asparagine glycosylation is present at Asn-9. A helical membrane pass occupies residues 24-46 (IASMVILGLTCLLGLLGNGLVLW). The Cytoplasmic portion of the chain corresponds to 47 to 57 (VAGVKMKTTVN). The chain crosses the membrane as a helical span at residues 58-80 (TVWFLHLTLADFLCCLSLPFSLA). The Extracellular segment spans residues 81-96 (HLILQGHWPYGLFLCK). A disulfide bridge links Cys-95 with Cys-172. A helical membrane pass occupies residues 97–118 (LIPSIIILNMFASVFLLTAISL). The Cytoplasmic portion of the chain corresponds to 119–139 (DRCLIVHKPIWCQNHRNVRTA). Residues 140–160 (FAICGCVWVVAFVMCVPVFVY) form a helical membrane-spanning segment. At 161 to 333 (RDLFIMDNRS…TPLMAITITR (173 aa)) the chain is on the extracellular side. N-linked (GlcNAc...) asparagine glycosylation occurs at Asn-168. Sulfotyrosine is present on residues Tyr-174 and Tyr-184. Asn-197 and Asn-201 each carry an N-linked (GlcNAc...) asparagine glycan. Tyr-312 is subject to Sulfotyrosine. The chain crosses the membrane as a helical span at residues 334–353 (LVVGFLVPFFIMVICYSLIV). Over 354–370 (FRMRKTNFTKSRNKTFR) the chain is Cytoplasmic. The helical transmembrane segment at 371–393 (VAVAVVTVFFICWTPYHLVGVLL) threads the bilayer. The Extracellular segment spans residues 394-410 (LITDPESSLGEAVMSWD). The helical transmembrane segment at 411-431 (HMSIALASANSCFNPFLYALL) threads the bilayer. The Cytoplasmic segment spans residues 432–477 (GKDFRKKARQSIKGILEAAFSEELTHSTNCTQDKASSKRNNMSTDV). Residue Ser-452 is modified to Phosphoserine. Thr-456 is modified (phosphothreonine).

This sequence belongs to the G-protein coupled receptor 1 family. As to quaternary structure, interacts with VGF-derived peptide TLQP-21. In terms of tissue distribution, detected in varying levels in all tissues examined except the spleen. Especially abundant in heart and lung.

The protein localises to the cell membrane. Receptor for the chemotactic and inflammatory peptide anaphylatoxin C3a. This receptor stimulates chemotaxis, granule enzyme release and superoxide anion production. The sequence is that of C3a anaphylatoxin chemotactic receptor (C3ar1) from Mus musculus (Mouse).